A 144-amino-acid chain; its full sequence is UPF0306 protein ESA_03544 (144 aa).

It belongs to the UPF0306 family.

The protein is UPF0306 protein ESA_03544 of Cronobacter sakazakii (strain ATCC BAA-894) (Enterobacter sakazakii).